A 416-amino-acid chain; its full sequence is Gamma-glutamyl phosphate reductase (416 aa).

Belongs to the gamma-glutamyl phosphate reductase family.

It localises to the cytoplasm. The enzyme catalyses L-glutamate 5-semialdehyde + phosphate + NADP(+) = L-glutamyl 5-phosphate + NADPH + H(+). It participates in amino-acid biosynthesis; L-proline biosynthesis; L-glutamate 5-semialdehyde from L-glutamate: step 2/2. In terms of biological role, catalyzes the NADPH-dependent reduction of L-glutamate 5-phosphate into L-glutamate 5-semialdehyde and phosphate. The product spontaneously undergoes cyclization to form 1-pyrroline-5-carboxylate. The polypeptide is Gamma-glutamyl phosphate reductase (Streptococcus equi subsp. zooepidemicus (strain MGCS10565)).